The following is a 130-amino-acid chain: Small ribosomal subunit protein uS9 (130 aa).

The segment at 98–130 (LKKAGMLTRDPRMKERKKYGLKKARKASQFSKR) is disordered. Positions 111–130 (KERKKYGLKKARKASQFSKR) are enriched in basic residues.

The protein belongs to the universal ribosomal protein uS9 family.

In Lacticaseibacillus casei (strain BL23) (Lactobacillus casei), this protein is Small ribosomal subunit protein uS9.